Here is a 353-residue protein sequence, read N- to C-terminus: Phospho-N-acetylmuramoyl-pentapeptide-transferase (353 aa).

Transmembrane regions (helical) follow at residues 22-42, 65-85, 88-108, 129-149, 161-181, 192-212, 228-248, 256-276, 281-301, and 330-350; these read FAFF…ITWA, TPTM…LSCI, DNIF…IGLI, LLTQ…SSEL, PLFD…ISSS, GLAT…LYLS, GLGE…GFLW, VFMG…LAII, ILLL…ILQV, and KIIV…LASI.

The protein belongs to the glycosyltransferase 4 family. MraY subfamily. It depends on Mg(2+) as a cofactor.

It localises to the cell inner membrane. It carries out the reaction UDP-N-acetyl-alpha-D-muramoyl-L-alanyl-gamma-D-glutamyl-meso-2,6-diaminopimeloyl-D-alanyl-D-alanine + di-trans,octa-cis-undecaprenyl phosphate = di-trans,octa-cis-undecaprenyl diphospho-N-acetyl-alpha-D-muramoyl-L-alanyl-D-glutamyl-meso-2,6-diaminopimeloyl-D-alanyl-D-alanine + UMP. The protein operates within cell wall biogenesis; peptidoglycan biosynthesis. Functionally, catalyzes the initial step of the lipid cycle reactions in the biosynthesis of the cell wall peptidoglycan: transfers peptidoglycan precursor phospho-MurNAc-pentapeptide from UDP-MurNAc-pentapeptide onto the lipid carrier undecaprenyl phosphate, yielding undecaprenyl-pyrophosphoryl-MurNAc-pentapeptide, known as lipid I. This Campylobacter jejuni subsp. jejuni serotype O:23/36 (strain 81-176) protein is Phospho-N-acetylmuramoyl-pentapeptide-transferase.